Reading from the N-terminus, the 232-residue chain is MNSPLSYNNVIEVTDLQRAFKQGEHEIQILRGIDLIVRRGEILALLGPSGAGKSTFLQAIGLLENGFTGSINILGQEIGSLNDKERTAIRRDHLGFVYQFHHLLPDFSALENVMLPQLIQGKSSHQAKEHAHFLLNSLKLEERLKHYPSQLSGGEQQRVAVARALANRPALVLADEPTGNLDEATGDIVLHEFLRLVRRQGSAAIIATHNMAMARKMDRIVTLHDGRLIEEY.

An ABC transporter domain is found at 11-232 (IEVTDLQRAF…LHDGRLIEEY (222 aa)). 47 to 54 (GPSGAGKS) contacts ATP.

This sequence belongs to the ABC transporter superfamily. Lipoprotein translocase (TC 3.A.1.125) family. As to quaternary structure, the complex is composed of two ATP-binding proteins (LolD) and two transmembrane proteins (LolC and LolE).

It is found in the cell inner membrane. Part of the ABC transporter complex LolCDE involved in the translocation of mature outer membrane-directed lipoproteins, from the inner membrane to the periplasmic chaperone, LolA. Responsible for the formation of the LolA-lipoprotein complex in an ATP-dependent manner. This chain is Lipoprotein-releasing system ATP-binding protein LolD, found in Zymomonas mobilis subsp. mobilis (strain ATCC 10988 / DSM 424 / LMG 404 / NCIMB 8938 / NRRL B-806 / ZM1).